Consider the following 215-residue polypeptide: Kinetochore protein Spc25 (215 aa).

The stretch at 43-114 forms a coiled coil; the sequence is DNLLTAMEKA…MECIHALKRA (72 aa).

This sequence belongs to the SPC25 family. Component of the Ndc80 complex, which is composed of Ndc80, Nuf2 and Spc25.

It localises to the nucleus. It is found in the chromosome. The protein resides in the centromere. Its subcellular location is the kinetochore. In terms of biological role, acts as a component of the essential kinetochore-associated Ndc80 complex, which is required for chromosome segregation and spindle checkpoint activity during meiosis and mitosis. Required for kinetochore integrity and the organization of stable microtubule binding sites in the outer plate of the kinetochore. Participates in SAC signaling that responds specifically to disruptions in spindle microtubule dynamics. The NDC80 complex synergistically enhances the affinity of the SKA1 complex for microtubules and may allow the NDC80 complex to track depolymerizing microtubules. The protein is Kinetochore protein Spc25 of Drosophila ananassae (Fruit fly).